A 200-amino-acid polypeptide reads, in one-letter code: dITP/XTP pyrophosphatase (200 aa).

16-21 (SNNDGK) provides a ligand contact to substrate. 2 residues coordinate Mg(2+): Glu46 and Asp75. Catalysis depends on Asp75, which acts as the Proton acceptor. Substrate contacts are provided by residues Ser76, 154–157 (FGYD), Lys177, and 182–183 (HR).

It belongs to the HAM1 NTPase family. As to quaternary structure, homodimer. Mg(2+) is required as a cofactor.

It catalyses the reaction XTP + H2O = XMP + diphosphate + H(+). The enzyme catalyses dITP + H2O = dIMP + diphosphate + H(+). It carries out the reaction ITP + H2O = IMP + diphosphate + H(+). Functionally, pyrophosphatase that catalyzes the hydrolysis of nucleoside triphosphates to their monophosphate derivatives, with a high preference for the non-canonical purine nucleotides XTP (xanthosine triphosphate), dITP (deoxyinosine triphosphate) and ITP. Seems to function as a house-cleaning enzyme that removes non-canonical purine nucleotides from the nucleotide pool, thus preventing their incorporation into DNA/RNA and avoiding chromosomal lesions. This Prochlorococcus marinus (strain SARG / CCMP1375 / SS120) protein is dITP/XTP pyrophosphatase.